The following is a 164-amino-acid chain: uncharacterized protein (164 aa).

This is an uncharacterized protein from Caenorhabditis elegans.